We begin with the raw amino-acid sequence, 637 residues long: MAKVRILIFTLVLFFSLNVHIHGFYLPGVAPQDFQMGDALMVKVNKLTSTKTQLPYSYYSLPYCRPEHIVDSAENLGEVLRGDRIENSPFVFKMRESQMCAAVCRVKLDKKTAKAFKEKIADEYRVNMILDNLPLVVPVQRPDQDNVVVYQHGFHVGLKGIFAGKKEEKYFIHNHLTFTVRYHRDIQTDSSRIVGFEVKPFSVKHEYEGQWNEKARLTTCDPHTKRAVTNSESPQEVEEGNEIIFTYDVDFQESEVKWASRWDTYLLMADDQIHWFSIVNSMMIVLFLSGMVAMIMLRTLYRDISNYNQLESHEEALEETGWKLVHGDVFRPPTNPELLCVYAGTGVQCFGMILVTMIFACLGFLSPSNRGGLMTAMLLLWVFMGLLAGYASSRLYKTLRGTEWKRNALKTAFMFPATVFVAFFVLNAIIWGQKSSGAVPFGTMFALVVLWFGISVPLVFIGGYIGFRKPAPEDPVKTNKIPRQIPTQAWYMNPIFSILIGGILPFGAVFIELFFILTSIWLHQFYYIFGFLFIVFIILIITCAEITVVLCYFQLCSEDYQWWWRSYLTSGSSAVYLFLYAVFYFYTKLEITKLVSAVLYFGYMLIVSYVFFVFTGAIGFYACFWFTRLIYSSVKID.

The signal sequence occupies residues 1–23; that stretch reads MAKVRILIFTLVLFFSLNVHIHG. Topologically, residues 24-274 are lumenal; sequence FYLPGVAPQD…YLLMADDQIH (251 aa). Residues 275 to 295 traverse the membrane as a helical segment; that stretch reads WFSIVNSMMIVLFLSGMVAMI. Topologically, residues 296–344 are cytoplasmic; it reads MLRTLYRDISNYNQLESHEEALEETGWKLVHGDVFRPPTNPELLCVYAG. The chain crosses the membrane as a helical span at residues 345-365; the sequence is TGVQCFGMILVTMIFACLGFL. Residues 366–370 lie on the Lumenal side of the membrane; the sequence is SPSNR. The chain crosses the membrane as a helical span at residues 371 to 391; it reads GGLMTAMLLLWVFMGLLAGYA. Residues 392–411 lie on the Cytoplasmic side of the membrane; it reads SSRLYKTLRGTEWKRNALKT. A helical transmembrane segment spans residues 412–432; sequence AFMFPATVFVAFFVLNAIIWG. Residues 433 to 444 are Lumenal-facing; it reads QKSSGAVPFGTM. Residues 445–465 traverse the membrane as a helical segment; it reads FALVVLWFGISVPLVFIGGYI. Residues 466-494 lie on the Cytoplasmic side of the membrane; sequence GFRKPAPEDPVKTNKIPRQIPTQAWYMNP. The chain crosses the membrane as a helical span at residues 495–515; sequence IFSILIGGILPFGAVFIELFF. The Lumenal segment spans residues 516 to 527; it reads ILTSIWLHQFYY. Residues 528–548 form a helical membrane-spanning segment; the sequence is IFGFLFIVFIILIITCAEITV. The Cytoplasmic segment spans residues 549-566; that stretch reads VLCYFQLCSEDYQWWWRS. Residues 567–587 form a helical membrane-spanning segment; it reads YLTSGSSAVYLFLYAVFYFYT. The Lumenal segment spans residues 588–593; the sequence is KLEITK. A helical membrane pass occupies residues 594 to 614; it reads LVSAVLYFGYMLIVSYVFFVF. Over 615 to 637 the chain is Cytoplasmic; the sequence is TGAIGFYACFWFTRLIYSSVKID. Positions 626 to 631 match the Endoplasmic reticulum export signal motif; it reads FTRLIY. The short motif at 635 to 637 is the Golgi retention signal element; the sequence is KID.

Belongs to the nonaspanin (TM9SF) (TC 9.A.2) family.

It localises to the endosome membrane. It is found in the golgi apparatus membrane. The chain is Transmembrane 9 superfamily member 10 from Arabidopsis thaliana (Mouse-ear cress).